The sequence spans 322 residues: Labrum-interacting protein from saliva LIPS-2 (322 aa).

The first 20 residues, 1-20 (MKTSLPIVVLLTAVISGVHP), serve as a signal peptide directing secretion. Cysteines 27 and 62 form a disulfide. N168 and N175 each carry an N-linked (GlcNAc...) asparagine glycan. A disulfide bridge links C249 with C295.

Monomer in solution. Interacts (via the N-terminal domain) with cuticular protein Cp19 (via the C-terminus). In terms of processing, proteolytically cleaved by human mast cell tryptase and chymase. Glycosylated. In terms of tissue distribution, female salivary gland (at protein level). Female saliva (at protein level).

It localises to the secreted. Its function is as follows. Salivary protein that promotes mosquito blood feeding on the vertebrate host by inducing morphological changes in the mosquito labrum. Interacts with the mosquito labrum end tip and triggers salivation and probing. Modulates enzymatic activities of human tryptase and chymase. This is Labrum-interacting protein from saliva LIPS-2 from Aedes albopictus (Asian tiger mosquito).